Here is a 1544-residue protein sequence, read N- to C-terminus: Rho guanine nucleotide exchange factor 12 (1544 aa).

Residues 1–62 are disordered; the sequence is MSGTQSTITD…KTKSSSEESR (62 aa). Residue Ser-2 is modified to N-acetylserine. A compositionally biased stretch (basic and acidic residues) spans 28–45; it reads SPTDKKQKVERIASHDFD. Residue Ser-41 is modified to Phosphoserine. Residues 72 to 151 form the PDZ domain; sequence CVIIQKDDNG…LTVQGRPPGS (80 aa). The stretch at 194–262 forms a coiled coil; that stretch reads MGEENNVVHN…LSKATGSAQD (69 aa). The segment at 247–346 is disordered; sequence PQLQEQLSKA…SLVGSPSTRI (100 aa). Composition is skewed to polar residues over residues 249 to 260 and 293 to 309; these read LQEQLSKATGSA and DCSS…NADS. Ser-309 carries the post-translational modification Phosphoserine. The segment covering 313–329 has biased composition (basic and acidic residues); it reads GPKERIYLEENPEKSET. The segment covering 330 to 344 has biased composition (polar residues); the sequence is IQDTDTQSLVGSPST. A Phosphoserine modification is found at Ser-341. Positions 367–558 constitute an RGSL domain; the sequence is GQCSCFQSIE…LMYMKHLGVK (192 aa). The disordered stretch occupies residues 570–706; sequence GRIGFLPKIK…GDTLDGTPRT (137 aa). Positions 582 to 592 are enriched in basic and acidic residues; that stretch reads MKKDKEGEEKG. Polar residues predominate over residues 631 to 640; it reads STPSSVSPEP. The residue at position 637 (Ser-637) is a Phosphoserine. Low complexity predominate over residues 663-676; that stretch reads ANSMSSVASGASFS. Thr-736 bears the Phosphothreonine mark. The region spanning 787-977 is the DH domain; it reads KRQEVINELF…RQILNYVNQA (191 aa). The PH domain occupies 1019–1132; sequence KMIHEGPLVW…WQDLICRMAA (114 aa). Positions 1138 to 1149 are enriched in polar residues; that stretch reads STKPIPLPQSTP. Positions 1138–1179 are disordered; sequence STKPIPLPQSTPGEGDNDEEDPSKLKEEQHGISVTGLQSPDR. Residues Ser-1288, Ser-1327, Ser-1377, Ser-1457, and Ser-1541 each carry the phosphoserine modification.

Interacts with GNA12 and GNA13, probably through the RGS-like domain. Interacts with RHOA, PLXNB1 and PLXNB2. Interacts through its PDZ domain with IGF1R beta subunit. Interacts with GCSAM. Found in a complex with ARHGEF11 and ARHGEF12; binding to ARHGEF11 and ARHGEF12 enhances CDC42 GEF activity of PLEKHG4B, and PLEKHG4B, in turn, inhibits ARHGEF11- and ARHGEF12-mediated RHOA activation. Ubiquitously expressed. Isoform 2 is found in jejunum and testis.

The protein resides in the cytoplasm. The protein localises to the membrane. Its function is as follows. May play a role in the regulation of RhoA GTPase by guanine nucleotide-binding alpha-12 (GNA12) and alpha-13 (GNA13). Acts as guanine nucleotide exchange factor (GEF) for RhoA GTPase and may act as GTPase-activating protein (GAP) for GNA12 and GNA13. In Homo sapiens (Human), this protein is Rho guanine nucleotide exchange factor 12 (ARHGEF12).